We begin with the raw amino-acid sequence, 579 residues long: Mycobactin import ATP-binding/permease protein IrtB (579 aa).

Topologically, residues 1 to 16 are cytoplasmic; that stretch reads MIRTWIALVPNDHRAR. A helical transmembrane segment spans residues 17–37; that stretch reads LIGFALLAFCSVVARAVGTVL. The 283-residue stretch at 17-299 folds into the ABC transmembrane type-1 domain; the sequence is LIGFALLAFC…VSELAPALES (283 aa). Topologically, residues 38-52 are periplasmic; sequence LVPLMAALFGEAPQR. The helical transmembrane segment at 53–73 threads the bilayer; it reads AWLWLGWLSAATVAGWVLDAV. Residues 74-123 lie on the Cytoplasmic side of the membrane; that stretch reads TARIGIELGFAVLNHTQHDVADRLPVVRLDWFTAENTATARQAIAATGPE. A helical membrane pass occupies residues 124 to 146; the sequence is LVGLVVNLVTPLTSAILLPAVIA. Over 147-155 the chain is Periplasmic; sequence LALLPISWQ. The chain crosses the membrane as a helical span at residues 156-178; the sequence is LGVAALAGVPLLLGALWASAAFA. Topologically, residues 179 to 237 are cytoplasmic; sequence RRADTAADKANTALTERIIEFARTQQALRAARRVEPARSLVGNALASQHTATMRLLGMQ. Residues 238–258 form a helical membrane-spanning segment; it reads IPGQLLFSIASQLALIVLAGT. Residues 259-579 lie on the Periplasmic side of the membrane; sequence TAALTITGTL…EAAEWQILAE (321 aa). The ABC transporter domain occupies 332–567; that stretch reads IEFDDVAFGY…GGRFSQFWRQ (236 aa). 366 to 373 contacts ATP; the sequence is GPSGCGKS.

It belongs to the ABC transporter superfamily. Siderophore-Fe(3+) uptake transporter (SIUT) (TC 3.A.1.21) family. As to quaternary structure, forms a heterodimer with IrtA.

The protein resides in the cell inner membrane. Functionally, part of the ABC transporter complex IrtAB involved in the import of iron-bound mycobactin (Fe-MBT) and carboxymycobactin (Fe-cMBT). Transmembrane domains (TMD) form a pore in the membrane and the ATP-binding domain (NBD) is responsible for energy generation. The chain is Mycobactin import ATP-binding/permease protein IrtB (irtB) from Mycobacterium bovis (strain ATCC BAA-935 / AF2122/97).